A 416-amino-acid polypeptide reads, in one-letter code: D-amino acid dehydrogenase (416 aa).

3-17 (ITILGSGVIGVTTAY) lines the FAD pocket.

The protein belongs to the DadA oxidoreductase family. FAD is required as a cofactor.

It carries out the reaction a D-alpha-amino acid + A + H2O = a 2-oxocarboxylate + AH2 + NH4(+). It functions in the pathway amino-acid degradation; D-alanine degradation; NH(3) and pyruvate from D-alanine: step 1/1. Oxidative deamination of D-amino acids. The chain is D-amino acid dehydrogenase from Brucella anthropi (strain ATCC 49188 / DSM 6882 / CCUG 24695 / JCM 21032 / LMG 3331 / NBRC 15819 / NCTC 12168 / Alc 37) (Ochrobactrum anthropi).